Reading from the N-terminus, the 92-residue chain is MLTSNRQGMAVYLTSLKFARQLRRFGYVHYVSKKMRYVVLYCNEEAVQTTMEKLQSFHFVKDVQLSMRPYVQTEFQNAKPDKAKEYDYKMGL.

This sequence belongs to the UPF0298 family.

The protein resides in the cytoplasm. This chain is UPF0298 protein BH2594, found in Halalkalibacterium halodurans (strain ATCC BAA-125 / DSM 18197 / FERM 7344 / JCM 9153 / C-125) (Bacillus halodurans).